The sequence spans 151 residues: MEKTYLPTVSTADKKWYVVDAENQRLGRLATQIAMILRGKNKPTYTPFMNTGDFVIVINAEKVTVTGNKGEQKLYRRHSGRPGGMKTETFNHLQERIPERIIEKAVKGMLPKNALGRQLFRSLKVYAGPDHPHAAQKPEVLSIQTIPGAKS.

This sequence belongs to the universal ribosomal protein uL13 family. Part of the 50S ribosomal subunit.

This protein is one of the early assembly proteins of the 50S ribosomal subunit, although it is not seen to bind rRNA by itself. It is important during the early stages of 50S assembly. This chain is Large ribosomal subunit protein uL13, found in Acaryochloris marina (strain MBIC 11017).